Consider the following 118-residue polypeptide: Ribonuclease P protein component (118 aa).

Belongs to the RnpA family. In terms of assembly, consists of a catalytic RNA component (M1 or rnpB) and a protein subunit.

It catalyses the reaction Endonucleolytic cleavage of RNA, removing 5'-extranucleotides from tRNA precursor.. Functionally, RNaseP catalyzes the removal of the 5'-leader sequence from pre-tRNA to produce the mature 5'-terminus. It can also cleave other RNA substrates such as 4.5S RNA. The protein component plays an auxiliary but essential role in vivo by binding to the 5'-leader sequence and broadening the substrate specificity of the ribozyme. The polypeptide is Ribonuclease P protein component (Rickettsia akari (strain Hartford)).